A 254-amino-acid polypeptide reads, in one-letter code: tRNA (guanine-N(1)-)-methyltransferase (254 aa).

Residues Gly113 and Leu133 to Leu138 contribute to the S-adenosyl-L-methionine site.

This sequence belongs to the RNA methyltransferase TrmD family. As to quaternary structure, homodimer.

The protein resides in the cytoplasm. The enzyme catalyses guanosine(37) in tRNA + S-adenosyl-L-methionine = N(1)-methylguanosine(37) in tRNA + S-adenosyl-L-homocysteine + H(+). In terms of biological role, specifically methylates guanosine-37 in various tRNAs. This chain is tRNA (guanine-N(1)-)-methyltransferase, found in Herpetosiphon aurantiacus (strain ATCC 23779 / DSM 785 / 114-95).